The following is an 844-amino-acid chain: Beta-mannosidase B (844 aa).

The active-site Proton donor is the glutamate 432. A glycan (N-linked (GlcNAc...) asparagine) is linked at asparagine 723.

The protein belongs to the glycosyl hydrolase 2 family. Beta-mannosidase B subfamily.

The catalysed reaction is Hydrolysis of terminal, non-reducing beta-D-mannose residues in beta-D-mannosides.. It participates in glycan metabolism; N-glycan degradation. Its function is as follows. Exoglycosidase that cleaves the single beta-linked mannose residue from the non-reducing end of beta-mannosidic oligosaccharides of various complexity and length. Prefers mannobiose over mannotriose and has no activity against polymeric mannan. Is also severely restricted by galactosyl substitutions at the +1 subsite. The protein is Beta-mannosidase B (mndB) of Aspergillus niger (strain ATCC MYA-4892 / CBS 513.88 / FGSC A1513).